The chain runs to 428 residues: Enolase (428 aa).

(2R)-2-phosphoglycerate is bound at residue glutamine 163. Glutamate 205 functions as the Proton donor in the catalytic mechanism. Positions 242, 285, and 312 each coordinate Mg(2+). (2R)-2-phosphoglycerate is bound by residues lysine 337, arginine 366, serine 367, and lysine 388. Residue lysine 337 is the Proton acceptor of the active site.

The protein belongs to the enolase family. Mg(2+) serves as cofactor.

It is found in the cytoplasm. The protein localises to the secreted. The protein resides in the cell surface. The enzyme catalyses (2R)-2-phosphoglycerate = phosphoenolpyruvate + H2O. It functions in the pathway carbohydrate degradation; glycolysis; pyruvate from D-glyceraldehyde 3-phosphate: step 4/5. Catalyzes the reversible conversion of 2-phosphoglycerate (2-PG) into phosphoenolpyruvate (PEP). It is essential for the degradation of carbohydrates via glycolysis. This is Enolase from Neisseria meningitidis serogroup A / serotype 4A (strain DSM 15465 / Z2491).